The primary structure comprises 227 residues: Ribose-5-phosphate isomerase A (227 aa).

Residues 26 to 29 (TGST), 82 to 85 (DGAD), and 95 to 98 (KGGG) contribute to the substrate site. Glutamate 104 functions as the Proton acceptor in the catalytic mechanism. Lysine 122 provides a ligand contact to substrate.

It belongs to the ribose 5-phosphate isomerase family. In terms of assembly, homodimer.

The catalysed reaction is aldehydo-D-ribose 5-phosphate = D-ribulose 5-phosphate. The protein operates within carbohydrate degradation; pentose phosphate pathway; D-ribose 5-phosphate from D-ribulose 5-phosphate (non-oxidative stage): step 1/1. In terms of biological role, catalyzes the reversible conversion of ribose-5-phosphate to ribulose 5-phosphate. This Streptococcus equi subsp. zooepidemicus (strain MGCS10565) protein is Ribose-5-phosphate isomerase A.